A 72-amino-acid polypeptide reads, in one-letter code: Translation initiation factor IF-1 (72 aa).

Residues 1–72 (MAKEDSIEMQ…TKGRIIFRAR (72 aa)) enclose the S1-like domain.

Belongs to the IF-1 family. Component of the 30S ribosomal translation pre-initiation complex which assembles on the 30S ribosome in the order IF-2 and IF-3, IF-1 and N-formylmethionyl-tRNA(fMet); mRNA recruitment can occur at any time during PIC assembly.

Its subcellular location is the cytoplasm. One of the essential components for the initiation of protein synthesis. Stabilizes the binding of IF-2 and IF-3 on the 30S subunit to which N-formylmethionyl-tRNA(fMet) subsequently binds. Helps modulate mRNA selection, yielding the 30S pre-initiation complex (PIC). Upon addition of the 50S ribosomal subunit IF-1, IF-2 and IF-3 are released leaving the mature 70S translation initiation complex. The protein is Translation initiation factor IF-1 of Actinobacillus succinogenes (strain ATCC 55618 / DSM 22257 / CCUG 43843 / 130Z).